Consider the following 253-residue polypeptide: Aminoglycoside nucleotidyltransferase (4') (253 aa).

As to quaternary structure, homodimer.

The catalysed reaction is kanamycin A + ATP = 4'-adenylylkanamycin A + diphosphate. The enzyme catalyses amikacin + ATP = 4'-adenylylamikacin + diphosphate. It catalyses the reaction neomycin B + ATP = 4'-adenylylneomycin B + diphosphate. It carries out the reaction paromomycin + ATP = 4'-adenylylparomomycin + diphosphate. The catalysed reaction is ribostamycin + ATP = 4'-adenylylribostamycin + diphosphate. The enzyme catalyses tobramycin + ATP = 4'-adenylyltobramycin + diphosphate. It catalyses the reaction kanamycin A + CTP = 4'-cytidylylkanamycin A + diphosphate. It carries out the reaction kanamycin A + GTP = 4'-guanylylkanamycin A + diphosphate. The catalysed reaction is kanamycin A + ITP = 4'-inosinylylkanamycin A + diphosphate. The enzyme catalyses dTTP + kanamycin A = 4'-thymidylylkanamycin A + diphosphate. It catalyses the reaction kanamycin A + UTP = 4'-uridylylkanamycin A + diphosphate. It carries out the reaction kanamycin A + dATP = 4'-(2'-deoxyadenylyl)kanamycin A + diphosphate. The catalysed reaction is kanamycin A + dCTP = 4'-(2'-deoxycytidylyl)kanamycin A + diphosphate. The enzyme catalyses kanamycin A + dGTP = 4'-(2'-deoxyguanylyl)kanamycin A + diphosphate. It catalyses the reaction dUTP + kanamycin A = 4'-(2'-deoxyuridylyl)kanamycin A + diphosphate. It carries out the reaction amikacin + GTP = 4'-guanylylamikacin + diphosphate. The catalysed reaction is amikacin + ITP = 4'-inosinylylamikacin + diphosphate. The enzyme catalyses amikacin + CTP = 4'-cytidylylamikacin + diphosphate. It catalyses the reaction amikacin + UTP = 4'-uridylylamikacin + diphosphate. It carries out the reaction amikacin + dTTP = 4'-thymidylylamikacin + diphosphate. In terms of biological role, inactivates aminoglycoside antibiotics such as kanamycin by catalyzing the transfer of a nucleotidyl group from nucleoside triphosphates such as (d)ATP to the 4'-hydroxyl group of the aminoglycoside. This chain is Aminoglycoside nucleotidyltransferase (4'), found in Bacillus sp.